Consider the following 172-residue polypeptide: Small ribosomal subunit protein uS5 (172 aa).

An S5 DRBM domain is found at 11-74 (LFESVVDIAR…RKAKGAMIRF (64 aa)).

Belongs to the universal ribosomal protein uS5 family. As to quaternary structure, part of the 30S ribosomal subunit. Contacts proteins S4 and S8.

With S4 and S12 plays an important role in translational accuracy. In terms of biological role, located at the back of the 30S subunit body where it stabilizes the conformation of the head with respect to the body. The protein is Small ribosomal subunit protein uS5 of Neorickettsia sennetsu (strain ATCC VR-367 / Miyayama) (Ehrlichia sennetsu).